Here is a 310-residue protein sequence, read N- to C-terminus: Beta-ketoacyl-[acyl-carrier-protein] synthase III 1 (310 aa).

Catalysis depends on residues Cys112 and His235. Positions 236-240 (QANIR) are ACP-binding. Asn265 is an active-site residue.

Belongs to the thiolase-like superfamily. FabH family. Homodimer.

It localises to the cytoplasm. The catalysed reaction is malonyl-[ACP] + acetyl-CoA + H(+) = 3-oxobutanoyl-[ACP] + CO2 + CoA. Its pathway is lipid metabolism; fatty acid biosynthesis. Functionally, catalyzes the condensation reaction of fatty acid synthesis by the addition to an acyl acceptor of two carbons from malonyl-ACP. Catalyzes the first condensation reaction which initiates fatty acid synthesis and may therefore play a role in governing the total rate of fatty acid production. Possesses both acetoacetyl-ACP synthase and acetyl transacylase activities. Its substrate specificity determines the biosynthesis of branched-chain and/or straight-chain of fatty acids. The polypeptide is Beta-ketoacyl-[acyl-carrier-protein] synthase III 1 (Bacillus cereus (strain ATCC 14579 / DSM 31 / CCUG 7414 / JCM 2152 / NBRC 15305 / NCIMB 9373 / NCTC 2599 / NRRL B-3711)).